Reading from the N-terminus, the 221-residue chain is Ribosomal RNA large subunit methyltransferase E (221 aa).

Residues glycine 60, tryptophan 62, aspartate 89, aspartate 105, and aspartate 134 each coordinate S-adenosyl-L-methionine. Residue lysine 174 is the Proton acceptor of the active site. Positions lysine 199–glycine 221 are disordered.

This sequence belongs to the class I-like SAM-binding methyltransferase superfamily. RNA methyltransferase RlmE family.

The protein localises to the cytoplasm. The catalysed reaction is uridine(2552) in 23S rRNA + S-adenosyl-L-methionine = 2'-O-methyluridine(2552) in 23S rRNA + S-adenosyl-L-homocysteine + H(+). In terms of biological role, specifically methylates the uridine in position 2552 of 23S rRNA at the 2'-O position of the ribose in the fully assembled 50S ribosomal subunit. This chain is Ribosomal RNA large subunit methyltransferase E, found in Ralstonia pickettii (strain 12J).